The following is a 525-amino-acid chain: Protein aurora borealis (525 aa).

The interval 114 to 146 is disordered; the sequence is WTDHDGKQPSELHPSKCLSSHDDSPDGKKPSLP. Positions 115 to 142 are enriched in basic and acidic residues; that stretch reads TDHDGKQPSELHPSKCLSSHDDSPDGKK. Residues Ser191, Ser250, Ser305, and Ser311 each carry the phosphoserine modification. Arg316 is subject to Omega-N-methylarginine. At Thr331 the chain carries Phosphothreonine. Residues 505 to 525 are disordered; it reads PGHTAQRCWMKSPRPSQCSRP.

The protein belongs to the BORA family. In terms of assembly, interacts with AURKA. In terms of processing, phosphorylated by AURKA.

In terms of biological role, required for the activation of AURKA at the onset of mitosis. This is Protein aurora borealis (Bora) from Mus musculus (Mouse).